A 303-amino-acid chain; its full sequence is Fe-S cluster assembly protein DRE2 (303 aa).

Positions 1–125 (MTHSRTALVL…WQKRAVTASA (125 aa)) are N-terminal SAM-like domain. Positions 126–188 (PVKLAPRQPV…GDAPIAENDL (63 aa)) are linker. [2Fe-2S] cluster is bound by residues C202, C213, C216, and C218. The tract at residues 202–218 (CGRTQTRRRKACKDCTC) is fe-S binding site A. Positions 266, 269, 277, and 280 each coordinate [4Fe-4S] cluster. Short sequence motifs (cx2C motif) lie at residues 266-269 (CGSC) and 277-280 (CSGC). Residues 266–280 (CGSCSLGDAFRCSGC) are fe-S binding site B.

It belongs to the anamorsin family. In terms of assembly, monomer. Interacts with TAH18. Interacts with MIA40. [2Fe-2S] cluster is required as a cofactor. The cofactor is [4Fe-4S] cluster.

The protein resides in the cytoplasm. Its subcellular location is the mitochondrion intermembrane space. Functionally, component of the cytosolic iron-sulfur (Fe-S) protein assembly (CIA) machinery required for the maturation of extramitochondrial Fe-S proteins. Part of an electron transfer chain functioning in an early step of cytosolic Fe-S biogenesis, facilitating the de novo assembly of a [4Fe-4S] cluster on the scaffold complex CFD1-NBP35. Electrons are transferred to DRE2 from NADPH via the FAD- and FMN-containing protein TAH18. TAH18-DRE2 are also required for the assembly of the diferric tyrosyl radical cofactor of ribonucleotide reductase (RNR), probably by providing electrons for reduction during radical cofactor maturation in the catalytic small subunit RNR2. This chain is Fe-S cluster assembly protein DRE2, found in Eremothecium gossypii (strain ATCC 10895 / CBS 109.51 / FGSC 9923 / NRRL Y-1056) (Yeast).